A 448-amino-acid chain; its full sequence is GA-binding protein subunit beta-2 (448 aa).

ANK repeat units lie at residues 5–34, 37–66, 70–99, 103–132, and 136–166; these read DLGK…PFTT, LGTS…SRDA, VDRT…DVNA, LKMT…DVHA, and FDKS…QVNV. Serine 256 is modified (phosphoserine). Disordered stretches follow at residues 325–354 and 420–448; these read EEEE…GNER and ELEE…TVSS. Residues 337–354 show a composition bias toward basic and acidic residues; that stretch reads RIGEKTNSVEESKEGNER. Residues 345–395 adopt a coiled-coil conformation; sequence VEESKEGNERELLQQQLQEANRRAQEYRHQLLKKEQEAEQYRLKLEAIARQ. The span at 428–448 shows a compositional bias: polar residues; the sequence is VTGSAGTTEPHTRVSMATVSS.

As to quaternary structure, heterotetramer of two alpha and two beta subunits. The C-terminal is necessary for the formation of a heterotetrameric GABP-alpha-2/beta-2 complex, and also facilitates homotypic dimerization. Interacts with ADGRB2.

It is found in the nucleus. Functionally, may function as transcription factor capable of interacting with purine rich repeats (GA repeats). This chain is GA-binding protein subunit beta-2 (GABPB2), found in Homo sapiens (Human).